Here is a 299-residue protein sequence, read N- to C-terminus: 4-diphosphocytidyl-2-C-methyl-D-erythritol kinase (299 aa).

Lys-22 is a catalytic residue. ATP is bound at residue 108-118 (PVGAGLGGGSS). The active site involves Asp-150.

This sequence belongs to the GHMP kinase family. IspE subfamily.

It carries out the reaction 4-CDP-2-C-methyl-D-erythritol + ATP = 4-CDP-2-C-methyl-D-erythritol 2-phosphate + ADP + H(+). It functions in the pathway isoprenoid biosynthesis; isopentenyl diphosphate biosynthesis via DXP pathway; isopentenyl diphosphate from 1-deoxy-D-xylulose 5-phosphate: step 3/6. Functionally, catalyzes the phosphorylation of the position 2 hydroxy group of 4-diphosphocytidyl-2C-methyl-D-erythritol. The polypeptide is 4-diphosphocytidyl-2-C-methyl-D-erythritol kinase (Desulfotalea psychrophila (strain LSv54 / DSM 12343)).